The sequence spans 625 residues: Dopamine beta-hydroxylase (625 aa).

Residues 1 to 9 (MQVPSPSAR) are Cytoplasmic-facing. Residues 10-30 (EAASMYGTAVAVFLVLLVAVL) form a helical; Signal-anchor for type II membrane protein membrane-spanning segment. Topologically, residues 31-625 (QGLAPPESPL…TVVNIGGGKV (595 aa)) are intragranular. In terms of domain architecture, DOMON spans 50-166 (GDLELSWDVS…GTVHLVYGVL (117 aa)). Disulfide bonds link Cys-147–Cys-604, Cys-224–Cys-275, Cys-261–Cys-287, Cys-382–Cys-495, Cys-386–Cys-573, and Cys-458–Cys-480. The N-linked (GlcNAc...) asparagine glycan is linked to Asn-177. The active site involves Tyr-222. The Cu(2+) site is built by His-254 and His-255. An N-linked (GlcNAc...) asparagine glycan is attached at Asn-315. Cu(2+) contacts are provided by His-325, His-404, His-406, and Met-479. His-404 is an active-site residue. N-linked (GlcNAc...) asparagine glycosylation is present at Asn-574.

Belongs to the copper type II ascorbate-dependent monooxygenase family. As to quaternary structure, homotetramer; composed of two disulfide-linked dimers. Requires Cu(2+) as cofactor. Proteolytic cleavage after the membrane-anchor leads to the release of the soluble form. Post-translationally, N-glycosylated.

It localises to the cytoplasmic vesicle. Its subcellular location is the secretory vesicle lumen. The protein resides in the secretory vesicle. The protein localises to the chromaffin granule lumen. It is found in the secreted. It localises to the secretory vesicle membrane. Its subcellular location is the chromaffin granule membrane. It carries out the reaction dopamine + 2 L-ascorbate + O2 = (R)-noradrenaline + 2 monodehydro-L-ascorbate radical + H2O. The protein operates within catecholamine biosynthesis; (R)-noradrenaline biosynthesis; (R)-noradrenaline from dopamine: step 1/1. In terms of biological role, catalyzes the hydroxylation of dopamine to noradrenaline (also known as norepinephrine), and is thus vital for regulation of these neurotransmitters. The chain is Dopamine beta-hydroxylase (DBH) from Canis lupus familiaris (Dog).